Reading from the N-terminus, the 428-residue chain is METTRSEALFKEAAKFIPGGVNSPVRACGSVGGSPLFIQKAEGSKIIDADGNVYIDYVGSWGPMILGHRHPDVVKALIEALASGTSFGAPTALETRLSQLVVEAVPSVEKVRMVNSGTEATMSAVRLARGYTGRDIIIKFDGGYHGHADTLLVAAGSGVATLNIPGSPGIPESVSAHTLSITYNDGEAVKRVMAEKGDRVAAIIVEPVAGNMGMVPPVKGFHETLRTLCTKHGALLIFDEVMTGFRVAKGSGQGLFGITPDLTCFGKIIGGGLPVGAYGGRREIMDQIAPAGPVYQAGTLSGNPLAMAAGIATLEALKKTGFYESLDAKTERLVTGLRTAAEKAGIDFTASHVGSMAGMFFTRATVTNFDEAKTSDLVNFSKFYTGMRDRGIYLAPSQFEALFVSAAHTNDEIDATIAAAADVMAGLV.

Lysine 267 carries the post-translational modification N6-(pyridoxal phosphate)lysine.

The protein belongs to the class-III pyridoxal-phosphate-dependent aminotransferase family. HemL subfamily. As to quaternary structure, homodimer. Pyridoxal 5'-phosphate serves as cofactor.

Its subcellular location is the cytoplasm. It carries out the reaction (S)-4-amino-5-oxopentanoate = 5-aminolevulinate. Its pathway is porphyrin-containing compound metabolism; protoporphyrin-IX biosynthesis; 5-aminolevulinate from L-glutamyl-tRNA(Glu): step 2/2. The chain is Glutamate-1-semialdehyde 2,1-aminomutase from Desulforapulum autotrophicum (strain ATCC 43914 / DSM 3382 / VKM B-1955 / HRM2) (Desulfobacterium autotrophicum).